A 427-amino-acid polypeptide reads, in one-letter code: Nuclear distribution protein PAC1-2 (427 aa).

In terms of domain architecture, LisH spans 8–40 (QKDDLNKSIAEYLYAQDLTEIADSLCARLSLDY). Residues 58 to 82 (SVIRLQKKLIESENRYTALQEDIAA) are a coiled coil. WD repeat units lie at residues 106–147 (SHRA…RTLK), 149–187 (HTREVWGVDFDSKGSFLATCSSDLSIKVWDTQQWDNAGY), 194–233 (GHEHTVSTVKFLPGDDLIASASRDKTIRIWEVATTFCIRT), 236–275 (GHEDWVRMTVPSTDGTLLGSCSSDNTARVWDPTSGVMKME), 278–336 (GHGH…ELRT), 339–378 (GHNDWIRGLVFHPSGKHLLSASDDKTIRVWELSTGRCMXV), and 381–420 (AHSHFITCLAWGPPVSAVARVELPRTPFCGDPKPIASRIM).

This sequence belongs to the WD repeat LIS1/nudF family. Self-associates. Interacts with NDL1 and dynein.

The protein resides in the cytoplasm. Its subcellular location is the cytoskeleton. It localises to the spindle pole. Functionally, positively regulates the activity of the minus-end directed microtubule motor protein dynein. May enhance dynein-mediated microtubule sliding by targeting dynein to the microtubule plus end. Required for nuclear migration during vegetative growth as well as development. Required for retrograde early endosome (EE) transport from the hyphal tip. Required for localization of dynein to the mitotic spindle poles. Recruits additional proteins to the dynein complex at SPBs. This is Nuclear distribution protein PAC1-2 from Postia placenta (strain ATCC 44394 / Madison 698-R) (Brown rot fungus).